The primary structure comprises 223 residues: MADSEEQEDYKMQAFDADIQNLLKTALKEPGNVDLEKAANVIADQSLRDTTFSREAGRMCYTIIQAESKQTGRTMFRSSLLNRLQVEYKNRKETRARSLQEWVCYVGFMCNVFDYLRVNNMPMLALVHPVYDCLFDLVQPESLKREEEVDCLVLQLHRVGEQLEKMNCQRMDDLFSQLRDSFLLQGGLSSLTQLLLLEMIEYRAAGWRMTDAAQNYYYSEVSD.

The MIF4G domain maps to 7-206; the sequence is QEDYKMQAFD…LEMIEYRAAG (200 aa).

Belongs to the MIF4GD family. As to quaternary structure, interacts with eif4g1, eif4g2 and slbp; probably tethered by SLBP to the 3'-end of mRNAs ending with the histone stem-loop, it also interacts with eif4g1 which is bound to their 5'-end.

It localises to the cytoplasm. Its subcellular location is the nucleus. In terms of biological role, functions in replication-dependent translation of histone mRNAs which differ from other eukaryotic mRNAs in that they do not end with a poly-A tail but a stem-loop. May participate in circularizing those mRNAs specifically enhancing their translation. This is MIF4G domain-containing protein A (mif4gd-a) from Xenopus laevis (African clawed frog).